A 544-amino-acid polypeptide reads, in one-letter code: Zinc finger and BTB domain-containing protein 7B (544 aa).

Residues 34–115 (CDLTIRTQGL…AYTATLTTSS (82 aa)) form the BTB domain. Residue serine 150 is modified to Phosphoserine. Disordered stretches follow at residues 171–221 (TTAS…ARAN) and 244–314 (GRLG…EDPI). A compositionally biased stretch (pro residues) spans 186–200 (PQVPLLPPPPPPPRP). A compositionally biased stretch (basic residues) spans 201 to 210 (VARRSRKPRK). An N6-acetyllysine; by EP300; alternate mark is found at lysine 210 and lysine 216. Glycyl lysine isopeptide (Lys-Gly) (interchain with G-Cter in ubiquitin); alternate cross-links involve residues lysine 210 and lysine 216. A compositionally biased stretch (acidic residues) spans 277–286 (FEGEEEEEEM). At lysine 339 the chain carries N6-acetyllysine; by EP300; alternate. Residue lysine 339 forms a Glycyl lysine isopeptide (Lys-Gly) (interchain with G-Cter in ubiquitin); alternate linkage. The tract at residues 348–404 (MPQECPVCHKIIHGAGKLPRHMRTHTGEKPFACEVCGVRFTRNDKLKIHMRKHTGER) is required for interaction with and acetylation by EP300. A C2H2-type 1 zinc finger spans residues 350 to 372 (QECPVCHKIIHGAGKLPRHMRTH). Residue threonine 373 is modified to Phosphothreonine. 2 C2H2-type zinc fingers span residues 378-400 (FACEVCGVRFTRNDKLKIHMRKH) and 406-428 (YSCPHCPARFLHSYDLKNHMHLH). Residues 434-458 (YECHLCHKAFAKEDHLQRHLKGQNC) form a C2H2-type 4; atypical zinc finger. Disordered regions lie at residues 465 to 493 (RRRKDDVAAPHYPPPSTTTSSPAGLDLSN) and 507 to 544 (WEQSATTGPPVTTQGPPEEEEEEGTPTTPQAEGAMESS). Composition is skewed to low complexity over residues 511–522 (ATTGPPVTTQGP) and 531–544 (TPTTPQAEGAMESS).

As to quaternary structure, homodimerizes. Interacts with NCL, NEDD4 and YBX1. Interacts with HNRNPU (via RNA-binding RGG-box region); the interaction facilitates the recruitment of long non-coding RNA Blnc1 by ZBTB7B. Interacts with HDAC4 and HDAC5; the interaction allows the recruitment of HDAC4 and HDAC5 on CD8 loci for deacetylation and possible inhibition of CD8 genes expression. Post-translationally, acetylated directly and specifically by EP300. EP300-mediated acetylation of Lys-210, Lys-216 and Lys-339 stabilizes the protein by antagonizing ubiquitin conjugation. Ubiquitinated, leading to proteasomal degradation. Competes with acetylation on Lys-210, Lys-216 and Lys-339. As to expression, widely expressed, with a higher level in skin. Expressed in thymus. Restricted to CD4 cells (mature single positive CD4(+) and intermediate CD4(+)CD8(+) cells). Expressed in the luminal epithelial cells in the mammary glands where is up-regulated at late pregnancy and lactation. Expression is enriched in brown fat.

Its subcellular location is the nucleus. In terms of biological role, transcription regulator that acts as a key regulator of lineage commitment of immature T-cell precursors. Exerts distinct biological functions in the mammary epithelial cells and T cells in a tissue-specific manner. Necessary and sufficient for commitment of CD4 lineage, while its absence causes CD8 commitment. Development of immature T-cell precursors (thymocytes) to either the CD4 helper or CD8 killer T-cell lineages correlates precisely with their T-cell receptor specificity for major histocompatibility complex class II or class I molecules, respectively. Cross-antagonism between ZBTB7B and CBF complexes are determinative to CD4 versus CD8 cell fate decision. Suppresses RUNX3 expression and imposes CD4+ lineage fate by inducing the SOCS suppressors of cytokine signaling. induces, as a transcriptional activator, SOCS genes expression which represses RUNX3 expression and promotes the CD4+ lineage fate. During CD4 lineage commitment, associates with multiple sites at the CD8 locus, acting as a negative regulator of the CD8 promoter and enhancers by epigenetic silencing through the recruitment of class II histone deacetylases, such as HDAC4 and HDAC5, to these loci. Regulates the development of IL17-producing CD1d-restricted naural killer (NK) T cells. Also functions as an important metabolic regulator in the lactating mammary glands. Critical feed-forward regulator of insulin signaling in mammary gland lactation, directly regulates expression of insulin receptor substrate-1 (IRS-1) and insulin-induced Akt-mTOR-SREBP signaling. Transcriptional repressor of the collagen COL1A1 and COL1A2 genes. May also function as a repressor of fibronectin and possibly other extracellular matrix genes. Potent driver of brown fat development, thermogenesis and cold-induced beige fat formation. Recruits the brown fat lncRNA 1 (Blnc1):HNRNPU ribonucleoprotein complex to activate thermogenic gene expression in brown and beige adipocytes. The polypeptide is Zinc finger and BTB domain-containing protein 7B (Mus musculus (Mouse)).